A 251-amino-acid polypeptide reads, in one-letter code: 3-deoxy-manno-octulosonate cytidylyltransferase (251 aa).

This sequence belongs to the KdsB family.

The protein localises to the cytoplasm. The catalysed reaction is 3-deoxy-alpha-D-manno-oct-2-ulosonate + CTP = CMP-3-deoxy-beta-D-manno-octulosonate + diphosphate. The protein operates within nucleotide-sugar biosynthesis; CMP-3-deoxy-D-manno-octulosonate biosynthesis; CMP-3-deoxy-D-manno-octulosonate from 3-deoxy-D-manno-octulosonate and CTP: step 1/1. Its pathway is bacterial outer membrane biogenesis; lipopolysaccharide biosynthesis. In terms of biological role, activates KDO (a required 8-carbon sugar) for incorporation into bacterial lipopolysaccharide in Gram-negative bacteria. The polypeptide is 3-deoxy-manno-octulosonate cytidylyltransferase (Vibrio vulnificus (strain CMCP6)).